Reading from the N-terminus, the 317-residue chain is Putative toluene-4-sulfonate monooxygenase system reductase subunit TsaB2 (317 aa).

Residues 4-106 (DVPVTVAAVR…SAPRNLFEMA (103 aa)) enclose the FAD-binding FR-type domain. Residue 110 to 220 (RRVLLLAGGI…PGSVRMERFK (111 aa)) participates in NAD(+) binding. The 2Fe-2S ferredoxin-type domain maps to 232 to 317 (FELVLQRAGL…CGGGRLVLDI (86 aa)). 3 residues coordinate [2Fe-2S] cluster: C266, C271, and C274.

In terms of assembly, monomer. Part of the p-toluenesulfonate methyl-monooxygenase complex TsaBM, comprising the reductase TsaB and the oxygenase TsaM. Requires FMN as cofactor.

Functionally, involved in the toluene-4-sulfonate degradation pathway. The chain is Putative toluene-4-sulfonate monooxygenase system reductase subunit TsaB2 (tsaB2) from Comamonas testosteroni (Pseudomonas testosteroni).